A 250-amino-acid chain; its full sequence is NADH-quinone oxidoreductase subunit C (250 aa).

This sequence belongs to the complex I 30 kDa subunit family. As to quaternary structure, NDH-1 is composed of 14 different subunits. Subunits NuoB, C, D, E, F, and G constitute the peripheral sector of the complex.

The protein localises to the cell inner membrane. The catalysed reaction is a quinone + NADH + 5 H(+)(in) = a quinol + NAD(+) + 4 H(+)(out). Its function is as follows. NDH-1 shuttles electrons from NADH, via FMN and iron-sulfur (Fe-S) centers, to quinones in the respiratory chain. The immediate electron acceptor for the enzyme in this species is believed to be ubiquinone. Couples the redox reaction to proton translocation (for every two electrons transferred, four hydrogen ions are translocated across the cytoplasmic membrane), and thus conserves the redox energy in a proton gradient. In Xanthomonas oryzae pv. oryzae (strain PXO99A), this protein is NADH-quinone oxidoreductase subunit C.